The chain runs to 159 residues: Transcriptional repressor NrdR (159 aa).

The segment at Cys-3–Cys-34 is a zinc-finger region. Positions Pro-49–Glu-139 constitute an ATP-cone domain.

The protein belongs to the NrdR family. The cofactor is Zn(2+).

Negatively regulates transcription of bacterial ribonucleotide reductase nrd genes and operons by binding to NrdR-boxes. The sequence is that of Transcriptional repressor NrdR from Burkholderia cenocepacia (strain HI2424).